The sequence spans 377 residues: Trans-enoyl reductase FMN2 (377 aa).

In terms of domain architecture, Enoyl reductase (ER) spans 7 to 370; the sequence is NASGGYCLNS…DGVIRGKKLV (364 aa). Residues 143–173 form a disordered region; it reads LSDMTGNGRSNGYTNGHTNGHTNGHSKGEEE. The segment covering 144 to 155 has biased composition (polar residues); sequence SDMTGNGRSNGY. Positions 156–167 are enriched in low complexity; sequence TNGHTNGHTNGH. NADP(+)-binding positions include 186–189, 209–212, Tyr227, and 274–275; these read ASAS, SPAN, and LD.

The protein belongs to the zinc-containing alcohol dehydrogenase family.

The protein operates within secondary metabolite biosynthesis. In terms of biological role, trans-enoyl reductase; part of the gene cluster that mediates the biosynthesis of fusamarins, isocoumarin derivatives that show moderate cytotoxicity with IC(50) values between 1 and 50 uM. The polyketide synthase FMN1 probably synthesizes two different polyketides, a tetra- and a pentaketide, containinga varying number of double bonds depending on the selective actions of the trans-enoyl reductase FMN2. Chain fusion will presumably be mediated by the KS domain before finally offloading is catalyzed by the alpha/beta hydrolase fold enzyme FMN3. The sequence is that of Trans-enoyl reductase FMN2 from Fusarium mangiferae (Mango malformation disease fungus).